The chain runs to 246 residues: Uridylate kinase (246 aa).

Residue 13–16 (KLSG) participates in ATP binding. Gly54 contributes to the UMP binding site. Residues Gly55 and Arg59 each contribute to the ATP site. Residues Asp74 and 135-142 (AGMPYFST) each bind UMP. Residues Asn163, Tyr169, and Asp172 each coordinate ATP.

It belongs to the UMP kinase family. Homohexamer.

Its subcellular location is the cytoplasm. The enzyme catalyses UMP + ATP = UDP + ADP. Its pathway is pyrimidine metabolism; CTP biosynthesis via de novo pathway; UDP from UMP (UMPK route): step 1/1. Its activity is regulated as follows. Inhibited by UTP. In terms of biological role, catalyzes the reversible phosphorylation of UMP to UDP. This Bifidobacterium longum (strain NCC 2705) protein is Uridylate kinase.